The sequence spans 69 residues: Conotoxin SIVA (69 aa).

The first 21 residues, 1–21 (MGMRMMFTVFLLVVLATTVVS), serve as a signal peptide directing secretion. Positions 22 to 38 (TPSDRASDGRNAAVHER) are excised as a propeptide. Q39 is modified (pyrrolidone carboxylic acid). S45 is a glycosylation site (O-linked (HexNAc...) serine). 4-hydroxyproline occurs at positions 55, 60, and 61. C68 is modified (cysteine amide).

Belongs to the conotoxin A superfamily. In terms of processing, contains 3 disulfide bonds. Post-translationally, O-linked glycan consists of Hex3-HexNAc2 pentasaccharide. Expressed by the venom duct.

The protein resides in the secreted. In terms of biological role, neurotoxin with probable activity on sodium channel. Induces intense repetitive firing of the frog neuromuscular junction, leading to a tetanic contracture in muscle fiber (spastic paralysis). In vivo, shows the same effect as the whole venom when injected on fish. Intraperitoneal injection into fish induces a period of rapid swimming followed by a spastic paralysis with stiff fibrillating fins. At high doses, the peptide is lethal to both fish and mice. This chain is Conotoxin SIVA, found in Conus striatus (Striated cone).